A 372-amino-acid polypeptide reads, in one-letter code: Glycerophosphodiester phosphodiesterase GDPD6 (372 aa).

The first 21 residues, 1–21 (MAFKYLLPLLLLSLLVANCAS), serve as a signal peptide directing secretion. The tract at residues 32–58 (KHATKKPLQTSRPYNLAHRGSNGELPE) is disordered. A GP-PDE domain is found at 44 to 362 (PYNLAHRGSN…DFTGSLHNYQ (319 aa)). 3 N-linked (GlcNAc...) asparagine glycosylation sites follow: asparagine 120, asparagine 239, and asparagine 260.

Belongs to the glycerophosphoryl diester phosphodiesterase family. As to expression, expressed in flowers and siliques.

The catalysed reaction is a sn-glycero-3-phosphodiester + H2O = an alcohol + sn-glycerol 3-phosphate + H(+). This Arabidopsis thaliana (Mouse-ear cress) protein is Glycerophosphodiester phosphodiesterase GDPD6.